Reading from the N-terminus, the 198-residue chain is TATA-box-binding protein (198 aa).

2 tandem repeats follow at residues I14–L90 and I105–L181.

This sequence belongs to the TBP family.

Its function is as follows. General factor that plays a role in the activation of archaeal genes transcribed by RNA polymerase. Binds specifically to the TATA box promoter element which lies close to the position of transcription initiation. This chain is TATA-box-binding protein, found in Saccharolobus shibatae (strain ATCC 51178 / DSM 5389 / JCM 8931 / NBRC 15437 / B12) (Sulfolobus shibatae).